We begin with the raw amino-acid sequence, 174 residues long: Co-chaperone protein HscB homolog (174 aa).

Residues 2–74 (NYFELFKFSP…IRRAEHMLSL (73 aa)) enclose the J domain.

The protein belongs to the HscB family. Interacts with HscA and stimulates its ATPase activity.

Co-chaperone involved in the maturation of iron-sulfur cluster-containing proteins. Seems to help targeting proteins to be folded toward HscA. The sequence is that of Co-chaperone protein HscB homolog from Shewanella baltica (strain OS185).